A 265-amino-acid chain; its full sequence is UDP-N-acetylenolpyruvoylglucosamine reductase (265 aa).

Positions 15-169 constitute an FAD-binding PCMH-type domain; it reads GVGGPAELWT…TRVRLKLKER (155 aa). Arginine 149 is a catalytic residue. A disordered region spans residues 182–203; sequence DRARKGQPKRKSAGCAFKNPPG. Cysteine 196 serves as the catalytic Proton donor.

The protein belongs to the MurB family. FAD is required as a cofactor.

It localises to the cytoplasm. It carries out the reaction UDP-N-acetyl-alpha-D-muramate + NADP(+) = UDP-N-acetyl-3-O-(1-carboxyvinyl)-alpha-D-glucosamine + NADPH + H(+). Its pathway is cell wall biogenesis; peptidoglycan biosynthesis. Functionally, cell wall formation. The chain is UDP-N-acetylenolpyruvoylglucosamine reductase from Thermus thermophilus (strain ATCC BAA-163 / DSM 7039 / HB27).